The sequence spans 358 residues: Gap junction alpha-5 protein (358 aa).

Over 1–19 the chain is Cytoplasmic; it reads MGDWSFLGEFLEEVHKHST. The chain crosses the membrane as a helical span at residues 20 to 40; that stretch reads VIGKVWLTVLFIFRMLVLGTA. Over 41 to 76 the chain is Extracellular; it reads AESSWGDEQADFRCDTIQPGCQNVCYDQAFPISHIR. The chain crosses the membrane as a helical span at residues 77–97; that stretch reads YWVLQIIFVSTPSLVYMGHAM. The Cytoplasmic segment spans residues 98–164; the sequence is HTVRMQEKQK…CTILIRTTME (67 aa). A helical membrane pass occupies residues 165–185; it reads VAFIVGQYLLYGIFLDTLHVC. Residues 186 to 205 lie on the Extracellular side of the membrane; the sequence is RRSPCPHPVNCYVSRPTEKN. The chain crosses the membrane as a helical span at residues 206–226; the sequence is VFIVFMMAVAGLSLFLSLAEL. The Cytoplasmic segment spans residues 227–358; the sequence is YHLGWKKIRQ…SKARSDDLSV (132 aa). 2 disordered regions span residues 242–262 and 318–358; these read RQGV…QSLT and SQKP…DLSV. Phosphoserine is present on residues S353 and S357.

The protein belongs to the connexin family. Alpha-type (group II) subfamily. In terms of assembly, a connexon is composed of a hexamer of connexins. In terms of tissue distribution, abundantly expressed in the lung, also expressed in the kidney and heart.

It is found in the cell membrane. The protein resides in the cell junction. Its subcellular location is the gap junction. Its function is as follows. One gap junction consists of a cluster of closely packed pairs of transmembrane channels, the connexons, through which materials of low MW diffuse from one cell to a neighboring cell. This chain is Gap junction alpha-5 protein (Gja5), found in Mus musculus (Mouse).